The sequence spans 475 residues: Probable dolichyl pyrophosphate Man9GlcNAc2 alpha-1,3-glucosyltransferase (475 aa).

8 helical membrane passes run 114 to 133 (VVSA…AYSL), 161 to 181 (GHFQ…AAIL), 235 to 255 (AVVL…LQAV), 296 to 316 (MALV…VLLF), 322 to 342 (VGFL…SFQV), 385 to 405 (LLVP…CFDS), 418 to 438 (IANI…TVPA), and 441 to 461 (KYPD…FFLF).

This sequence belongs to the ALG6/ALG8 glucosyltransferase family.

The protein localises to the endoplasmic reticulum membrane. It catalyses the reaction an alpha-D-Man-(1-&gt;2)-alpha-D-Man-(1-&gt;2)-alpha-D-Man-(1-&gt;3)-[alpha-D-Man-(1-&gt;2)-alpha-D-Man-(1-&gt;3)-[alpha-D-Man-(1-&gt;2)-alpha-D-Man-(1-&gt;6)]-alpha-D-Man-(1-&gt;6)]-beta-D-Man-(1-&gt;4)-beta-D-GlcNAc-(1-&gt;4)-alpha-D-GlcNAc-diphospho-di-trans,poly-cis-dolichol + a di-trans,poly-cis-dolichyl beta-D-glucosyl phosphate = an alpha-D-Glc-(1-&gt;3)-alpha-D-Man-(1-&gt;2)-alpha-D-Man-(1-&gt;2)-alpha-D-Man-(1-&gt;3)-[alpha-D-Man-(1-&gt;2)-alpha-D-Man-(1-&gt;3)-[alpha-D-Man-(1-&gt;2)-alpha-D-Man-(1-&gt;6)]-alpha-D-Man-(1-&gt;6)]-beta-D-Man-(1-&gt;4)-beta-D-GlcNAc-(1-&gt;4)-alpha-D-GlcNAc-diphospho-di-trans,poly-cis-dolichol + a di-trans,poly-cis-dolichyl phosphate + H(+). It participates in protein modification; protein glycosylation. Functionally, adds the first glucose residue to the lipid-linked oligosaccharide precursor for N-linked glycosylation. Transfers glucose from dolichyl phosphate glucose (Dol-P-Glc) onto the lipid-linked oligosaccharide Man(9)GlcNAc(2)-PP-Dol. Involved in cuticle differentiation. The sequence is that of Probable dolichyl pyrophosphate Man9GlcNAc2 alpha-1,3-glucosyltransferase (gny) from Drosophila melanogaster (Fruit fly).